The primary structure comprises 579 residues: YTH domain-containing family protein 2 (579 aa).

A disordered region spans residues 1-45 (MSASSLLEQRPKGQGNKVQNGSVHQKDGLNDDDFEPYLSPQARPN). Ser2 is modified (N-acetylserine). Phosphoserine is present on residues Ser2, Ser4, Ser5, Ser22, Ser39, and Ser196. A localization to mRNA processing bodies (P-bodies) region spans residues 2–384 (SASSLLEQRP…QAGSGSTPSE (383 aa)). Residues 247–387 (AKQQPKLKTK…SGSTPSEPHP (141 aa)) form a disordered region. A compositionally biased stretch (polar residues) spans 291–316 (ALVQNIGQPTQGSPQHVGQQANNSPP). Residues 337–349 (AQLSVQQQAAQPT) show a composition bias toward low complexity. Ser359 carries the phosphoserine modification. Residues 359–371 (SGFGHNGVDGNGV) show a composition bias toward gly residues. Polar residues predominate over residues 372–383 (GQSQAGSGSTPS). The tract at residues 385 to 579 (PHPVLEKLRS…VKKERQGRGK (195 aa)) is interaction with m6A-containing mRNAs. At Ser394 the chain carries Phosphoserine. One can recognise a YTH domain in the interval 410-544 (GRVFIIKSYS…EKAKQVLKII (135 aa)). Residues 416–418 (KSY), Asp422, 432–433 (WC), Asn462, Trp486, and Trp491 contribute to the RNA site.

Belongs to the YTHDF family. YTHDF2 subfamily. In terms of assembly, interacts with CNOT1; interaction is direct and promotes recruitment of the CCR4-NOT complex. Interacts with YTHDF3. Interacts with RIDA/HRSP12; interaction leads to recruitment of the ribonuclease P/MRP complex. Post-translationally, ubiquitinated by the SCF(SKP2) complex, leading to its degradation.

Its subcellular location is the cytoplasm. The protein resides in the cytosol. It localises to the P-body. It is found in the stress granule. The protein localises to the nucleus. Specifically recognizes and binds N6-methyladenosine (m6A)-containing RNAs, and regulates their stability. M6A is a modification present at internal sites of mRNAs and some non-coding RNAs and plays a role in mRNA stability and processing. Acts as a regulator of mRNA stability by promoting degradation of m6A-containing mRNAs via interaction with the CCR4-NOT and ribonuclease P/MRP complexes, depending on the context. The YTHDF paralogs (YTHDF1, YTHDF2 and YTHDF3) share m6A-containing mRNAs targets and act redundantly to mediate mRNA degradation and cellular differentiation. M6A-containing mRNAs containing a binding site for RIDA/HRSP12 (5'-GGUUC-3') are preferentially degraded by endoribonucleolytic cleavage: cooperative binding of RIDA/HRSP12 and YTHDF2 to transcripts leads to recruitment of the ribonuclease P/MRP complex. Other m6A-containing mRNAs undergo deadenylation via direct interaction between YTHDF2 and CNOT1, leading to recruitment of the CCR4-NOT and subsequent deadenylation of m6A-containing mRNAs. Required maternally to regulate oocyte maturation: probably acts by binding to m6A-containing mRNAs, thereby regulating maternal transcript dosage during oocyte maturation, which is essential for the competence of oocytes to sustain early zygotic development. Also required during spermatogenesis: regulates spermagonial adhesion by promoting degradation of m6A-containing transcripts coding for matrix metallopeptidases. Also involved in hematopoietic stem cells specification by binding to m6A-containing mRNAs, leading to promote their degradation. Also acts as a regulator of neural development by promoting m6A-dependent degradation of neural development-related mRNA targets. Inhibits neural specification of induced pluripotent stem cells by binding to methylated neural-specific mRNAs and promoting their degradation, thereby restraining neural differentiation. Regulates circadian regulation of hepatic lipid metabolism: acts by promoting m6A-dependent degradation of PPARA transcripts. Regulates the innate immune response to infection by inhibiting the type I interferon response: acts by binding to m6A-containing IFNB transcripts and promoting their degradation. May also act as a promoter of cap-independent mRNA translation following heat shock stress: upon stress, relocalizes to the nucleus and specifically binds mRNAs with some m6A methylation mark at their 5'-UTR, protecting demethylation of mRNAs by FTO, thereby promoting cap-independent mRNA translation. Regulates mitotic entry by promoting the phase-specific m6A-dependent degradation of WEE1 transcripts. Promotes formation of phase-separated membraneless compartments, such as P-bodies or stress granules, by undergoing liquid-liquid phase separation upon binding to mRNAs containing multiple m6A-modified residues: polymethylated mRNAs act as a multivalent scaffold for the binding of YTHDF proteins, juxtaposing their disordered regions and thereby leading to phase separation. The resulting mRNA-YTHDF complexes then partition into different endogenous phase-separated membraneless compartments, such as P-bodies, stress granules or neuronal RNA granules. May also recognize and bind RNAs modified by C5-methylcytosine (m5C) and act as a regulator of rRNA processing. The sequence is that of YTH domain-containing family protein 2 from Macaca fascicularis (Crab-eating macaque).